The following is a 108-amino-acid chain: Large ribosomal subunit protein bL31B (108 aa).

The segment at 81-108 is disordered; that stretch reads KPAQPVQAPAEEGPVVKGKKKAPAKKKK. Residues 97 to 108 are compositionally biased toward basic residues; sequence KGKKKAPAKKKK.

The protein belongs to the bacterial ribosomal protein bL31 family. Type B subfamily. In terms of assembly, part of the 50S ribosomal subunit.

The sequence is that of Large ribosomal subunit protein bL31B from Chlamydia caviae (strain ATCC VR-813 / DSM 19441 / 03DC25 / GPIC) (Chlamydophila caviae).